A 521-amino-acid chain; its full sequence is Potassium/proton antiporter CemA (521 aa).

Transmembrane regions (helical) follow at residues 68-88, 294-314, 399-419, 446-466, and 481-501; these read FVFI…LLNI, ALAS…ISFP, ILHL…FISG, ILLL…EILI, and IISC…KYWI.

It belongs to the CemA family.

Its subcellular location is the plastid. It localises to the chloroplast inner membrane. It catalyses the reaction K(+)(in) + H(+)(out) = K(+)(out) + H(+)(in). Its function is as follows. Contributes to K(+)/H(+) antiport activity by supporting proton efflux to control proton extrusion and homeostasis in chloroplasts in a light-dependent manner to modulate photosynthesis. Prevents excessive induction of non-photochemical quenching (NPQ) under continuous-light conditions. Indirectly promotes efficient inorganic carbon uptake into chloroplasts. The chain is Potassium/proton antiporter CemA from Huperzia lucidula (Shining clubmoss).